We begin with the raw amino-acid sequence, 67 residues long: ATP synthase F(0) complex subunit 8 (67 aa).

Residues 8 to 24 traverse the membrane as a helical segment; the sequence is TWFITIISSMITLFILF. Position 54 is an N6-acetyllysine; alternate (Lys-54). The residue at position 54 (Lys-54) is an N6-succinyllysine; alternate. Lys-57 bears the N6-acetyllysine mark.

Belongs to the ATPase protein 8 family. As to quaternary structure, component of the ATP synthase complex composed at least of ATP5F1A/subunit alpha, ATP5F1B/subunit beta, ATP5MC1/subunit c (homooctomer), MT-ATP6/subunit a, MT-ATP8/subunit 8, ATP5ME/subunit e, ATP5MF/subunit f, ATP5MG/subunit g, ATP5MK/subunit k, ATP5MJ/subunit j, ATP5F1C/subunit gamma, ATP5F1D/subunit delta, ATP5F1E/subunit epsilon, ATP5PF/subunit F6, ATP5PB/subunit b, ATP5PD/subunit d, ATP5PO/subunit OSCP. ATP synthase complex consists of a soluble F(1) head domain (subunits alpha(3) and beta(3)) - the catalytic core - and a membrane F(0) domain - the membrane proton channel (subunits c, a, 8, e, f, g, k and j). These two domains are linked by a central stalk (subunits gamma, delta, and epsilon) rotating inside the F1 region and a stationary peripheral stalk (subunits F6, b, d, and OSCP). Interacts with PRICKLE3.

It is found in the mitochondrion membrane. Functionally, subunit 8, of the mitochondrial membrane ATP synthase complex (F(1)F(0) ATP synthase or Complex V) that produces ATP from ADP in the presence of a proton gradient across the membrane which is generated by electron transport complexes of the respiratory chain. ATP synthase complex consist of a soluble F(1) head domain - the catalytic core - and a membrane F(1) domain - the membrane proton channel. These two domains are linked by a central stalk rotating inside the F(1) region and a stationary peripheral stalk. During catalysis, ATP synthesis in the catalytic domain of F(1) is coupled via a rotary mechanism of the central stalk subunits to proton translocation. In vivo, can only synthesize ATP although its ATP hydrolase activity can be activated artificially in vitro. Part of the complex F(0) domain. This Mus musculus (Mouse) protein is ATP synthase F(0) complex subunit 8.